Reading from the N-terminus, the 201-residue chain is Protein TV1384 (201 aa).

Positions Asp11–Gln200 constitute an AMMECR1 domain.

This chain is Protein TV1384, found in Thermoplasma volcanium (strain ATCC 51530 / DSM 4299 / JCM 9571 / NBRC 15438 / GSS1).